Reading from the N-terminus, the 1781-residue chain is Signal-induced proliferation-associated 1-like protein 3 (1781 aa).

2 disordered regions span residues 45 to 166 (SMSQ…FLPL) and 239 to 332 (TELL…EASR). Residues 54-73 (PATATATATATTRPSPTTPA) are compositionally biased toward low complexity. Over residues 87 to 97 (PPKREALREHS) the composition is skewed to basic and acidic residues. Residue Ser-100 is modified to Phosphoserine. The segment covering 118-135 (RSIQNGQPPTSTPASSGS) has biased composition (polar residues). Basic residues predominate over residues 137-146 (AFHRLSRRRS). At Ser-146 the chain carries Phosphoserine. Ser-401 carries the phosphoserine modification. Residues 611-828 (LLKLDEQGLC…RTRQEYLKDL (218 aa)) form the Rap-GAP domain. The 77-residue stretch at 966-1042 (DMTLRRNGLG…VKVVIIPPFE (77 aa)) folds into the PDZ domain. 4 disordered regions span residues 1046-1112 (PRRG…SLSR), 1124-1221 (ESQP…QKPE), 1236-1565 (AGSS…GLEP), and 1583-1636 (TLPA…RLDP). Composition is skewed to polar residues over residues 1080–1111 (APWQWSGPASHNSLPASKWATPTTPGHAQSLS) and 1157–1166 (PSGSFSTPGS). The segment covering 1196–1210 (DGTSSGDSSSGGLTS) has biased composition (low complexity). Basic and acidic residues predominate over residues 1245–1261 (SRQDAAGKDSPNRHSKG). Positions 1266–1281 (SSHSSSNTLSSNASSS) are enriched in low complexity. Polar residues predominate over residues 1304–1322 (GGSSDSGIDTTLYTSSPSC). Ser-1364 is modified (phosphoserine). The residue at position 1387 (Thr-1387) is a Phosphothreonine. The span at 1425-1441 (RPSQLAQPSPFQLSASV) shows a compositional bias: polar residues. Position 1448 is an N6-acetyllysine (Lys-1448). The span at 1509 to 1518 (TIEDDLKKLI) shows a compositional bias: basic and acidic residues. The segment covering 1532-1547 (GQSPQKGLQRTLSDES) has biased composition (polar residues). Residues Ser-1544 and Ser-1547 each carry the phosphoserine modification. Positions 1599–1609 (PGATPAAGSGF) are enriched in low complexity. Ser-1619 and Ser-1622 each carry phosphoserine. Over residues 1625–1635 (DGRDRPLRRLD) the composition is skewed to basic and acidic residues. Ser-1677 is modified (phosphoserine). A disordered region spans residues 1685–1712 (SPVHSHLSLERGPPTPRTTPTMSEEPPL). Phosphothreonine occurs at positions 1699 and 1703. A coiled-coil region spans residues 1720–1774 (QLEVMLKQLHTDLQKEKQDKVVLQSEVASLRQNNQRLQEESQAASEQLRKFAEIF).

Its subcellular location is the apical cell membrane. In terms of biological role, plays a critical role in epithelial cell morphogenesis, polarity, adhesion and cytoskeletal organization in the lens. In Homo sapiens (Human), this protein is Signal-induced proliferation-associated 1-like protein 3 (SIPA1L3).